The sequence spans 213 residues: 3-isopropylmalate dehydratase small subunit (213 aa).

Belongs to the LeuD family. LeuD type 1 subfamily. Heterodimer of LeuC and LeuD.

It carries out the reaction (2R,3S)-3-isopropylmalate = (2S)-2-isopropylmalate. Its pathway is amino-acid biosynthesis; L-leucine biosynthesis; L-leucine from 3-methyl-2-oxobutanoate: step 2/4. Catalyzes the isomerization between 2-isopropylmalate and 3-isopropylmalate, via the formation of 2-isopropylmaleate. In Pseudomonas syringae pv. syringae (strain B728a), this protein is 3-isopropylmalate dehydratase small subunit.